The following is a 124-amino-acid chain: Fluoride-specific ion channel FluC (124 aa).

The next 4 membrane-spanning stretches (helical) occupy residues 5 to 25 (VYIA…SGFV), 32 to 52 (SFPY…GLIM), 67 to 87 (FAIT…SFET), and 96 to 116 (LLIA…CTWI). The Na(+) site is built by Gly-75 and Thr-78.

The protein belongs to the fluoride channel Fluc/FEX (TC 1.A.43) family.

The protein localises to the cell inner membrane. The enzyme catalyses fluoride(in) = fluoride(out). Na(+) is not transported, but it plays an essential structural role and its presence is essential for fluoride channel function. Fluoride-specific ion channel. Important for reducing fluoride concentration in the cell, thus reducing its toxicity. This is Fluoride-specific ion channel FluC from Citrifermentans bemidjiense (strain ATCC BAA-1014 / DSM 16622 / JCM 12645 / Bem) (Geobacter bemidjiensis).